The primary structure comprises 136 residues: Ribosome-binding factor A (136 aa).

It belongs to the RbfA family. As to quaternary structure, monomer. Binds 30S ribosomal subunits, but not 50S ribosomal subunits or 70S ribosomes.

It localises to the cytoplasm. One of several proteins that assist in the late maturation steps of the functional core of the 30S ribosomal subunit. Associates with free 30S ribosomal subunits (but not with 30S subunits that are part of 70S ribosomes or polysomes). Required for efficient processing of 16S rRNA. May interact with the 5'-terminal helix region of 16S rRNA. This chain is Ribosome-binding factor A, found in Serratia proteamaculans (strain 568).